A 296-amino-acid chain; its full sequence is Ribosomal protein L11 methyltransferase (296 aa).

S-adenosyl-L-methionine is bound by residues Thr-139, Gly-163, Asp-185, and Asn-232.

It belongs to the methyltransferase superfamily. PrmA family.

It is found in the cytoplasm. It catalyses the reaction L-lysyl-[protein] + 3 S-adenosyl-L-methionine = N(6),N(6),N(6)-trimethyl-L-lysyl-[protein] + 3 S-adenosyl-L-homocysteine + 3 H(+). Functionally, methylates ribosomal protein L11. The sequence is that of Ribosomal protein L11 methyltransferase from Rippkaea orientalis (strain PCC 8801 / RF-1) (Cyanothece sp. (strain PCC 8801)).